A 218-amino-acid polypeptide reads, in one-letter code: Ribonuclease S-7 (218 aa).

The first 22 residues, 1 to 22 (MLNSPLTSVLFVLLFVLSPIYG), serve as a signal peptide directing secretion. Gln-32 lines the RNA pocket. Cysteines 38 and 43 form a disulfide. Residue Asn-49 is glycosylated (N-linked (GlcNAc...) asparagine). His-53 lines the RNA pocket. The active-site Proton donor is the His-53. N-linked (GlcNAc...) asparagine glycosylation occurs at Asn-59. A disulfide bridge links Cys-67 with Cys-116. Residues 91–92 (DL), Phe-105, 108–109 (HE), and 112–113 (KH) each bind RNA. The active site involves Glu-109. His-113 functions as the Proton acceptor in the catalytic mechanism. An N-linked (GlcNAc...) asparagine glycan is attached at Asn-162. 2 disulfide bridges follow: Cys-177-Cys-207 and Cys-190-Cys-201.

It belongs to the RNase T2 family.

It is found in the secreted. Its subcellular location is the extracellular space. It carries out the reaction a ribonucleotidyl-ribonucleotide-RNA + H2O = a 3'-end 3'-phospho-ribonucleotide-RNA + a 5'-end dephospho-ribonucleoside-RNA + H(+). In terms of biological role, self-incompatibility (SI) is the inherited ability of a flowering plant to prevent self-fertilization by discriminating between self and non-self pollen during pollination. In many species of the Solanaceae, self-incompatibility is controlled by the single, multiallelic locus S. This stylar glycoprotein is associated with expression of self-incompatibility in potato. This Nicotiana alata (Winged tobacco) protein is Ribonuclease S-7.